A 551-amino-acid polypeptide reads, in one-letter code: uncharacterized protein (551 aa).

Residues 1 to 7 (MKKNSSV) lie on the Cytoplasmic side of the membrane. Residues 8–28 (VFFLVGLSQFVTMAFLIIGSI) form a helical membrane-spanning segment. Residues 29-88 (TAPIFKQIGYSKYDEITYGTFGYCKEGSCSKASYNYHPDELSDSDSNWKLNSNARSILGK) lie on the Vacuolar side of the membrane. The chain crosses the membrane as a helical span at residues 89–109 (IIFITPIAAGLNFLGFLCTIM). At 110-135 (SVLLINVLSSDRVGSASAIMFFVNLT) the chain is on the cytoplasmic side. The chain crosses the membrane as a helical span at residues 136–156 (FSTLGFLSASLICIVVFLLFY). The Vacuolar segment spans residues 157–160 (PHVT). Residues 161–181 (WCSWVLIPGAALSLLVIPLIF) traverse the membrane as a helical segment. The Cytoplasmic segment spans residues 182-551 (SAYSRSSGSR…TSLNNPYGFR (370 aa)). A phosphoserine mark is found at Ser-224 and Ser-232. The tract at residues 280–341 (AKDMENSNGS…NGSNTSNNIN (62 aa)) is disordered. The span at 307–320 (TSTYSVIESESGLK) shows a compositional bias: polar residues. Positions 321 to 341 (NGSVSNNYVRNNGSNTSNNIN) are enriched in low complexity. Ser-363 is subject to Phosphoserine.

As to quaternary structure, forms homo dimers or homooligomers in MCC microdomains. Interacts with BOI2 and RHO3, two key regulators of secretion.

It localises to the vacuole membrane. It is found in the cell membrane. Protein involved in secretion and cell wall organization. Contributes to cell surface-related functions as a auxiliary component of MCC/eisosome that specifically interacts with the secretory pathway. This is an uncharacterized protein from Saccharomyces cerevisiae (strain ATCC 204508 / S288c) (Baker's yeast).